The sequence spans 318 residues: S-adenosylmethionine/S-adenosylhomocysteine transporter (318 aa).

10 helical membrane passes run phenylalanine 7 to tryptophan 27, leucine 44 to phenylalanine 64, valine 76 to isoleucine 96, lysine 105 to leucine 125, leucine 134 to glutamate 154, leucine 163 to leucine 183, serine 193 to alanine 213, leucine 231 to phenylalanine 251, phenylalanine 262 to leucine 282, and serine 285 to tyrosine 305. Positions phenylalanine 25–leucine 148 constitute an EamA 1 domain. One can recognise an EamA 2 domain in the interval cysteine 191–isoleucine 304.

Belongs to the drug/metabolite transporter (DMT) superfamily. 10 TMS drug/metabolite exporter (DME) (TC 2.A.7.3) family.

It is found in the cell membrane. Its function is as follows. Transports S-adenosylmethionine (SAM) and S-adenosylhomocysteine (SAH). Allows bacteria to acquire SAM from the eukaryotic host cell and to likely remove the toxic by-product SAH. The polypeptide is S-adenosylmethionine/S-adenosylhomocysteine transporter (Chlamydia muridarum (strain MoPn / Nigg)).